Here is a 102-residue protein sequence, read N- to C-terminus: Salivary thrombin inhibitor anophelin (102 aa).

Positions 1 to 21 (MATKLIVIAFLCAALIAVVQS) are cleaved as a signal peptide. A disordered region spans residues 25 to 102 (YAQGEEPTYD…SDSSSESTEH (78 aa)). Residues 59–69 (SQLTEYANTAQ) are compositionally biased toward polar residues. Residues 70–73 (DPGR) are blocks active site cleft of host thrombin in a reverse direction compared to substrates. Over residues 80 to 90 (QANSNNGDQLP) the composition is skewed to polar residues. Low complexity predominate over residues 91-102 (SQSDSSSESTEH).

Belongs to the anophelin family. Interacts with human F2 (thrombin); the interaction results in thrombin inhibition.

Its subcellular location is the secreted. In terms of biological role, salivary protein with anticoagulant activity that inhibits host thrombin (F2). This is Salivary thrombin inhibitor anophelin from Anopheles funestus (African malaria mosquito).